A 495-amino-acid polypeptide reads, in one-letter code: Leucine aminopeptidase 2 (495 aa).

Residues 1–21 form the signal peptide; the sequence is MKSQLLSLAVAVTTISQGVVG. Residues 124–218 enclose the PA domain; the sequence is PPASKIMAEL…EDGKNLATLV (95 aa). 2 N-linked (GlcNAc...) asparagine glycosylation sites follow: asparagine 142 and asparagine 235. Histidine 259 and aspartate 271 together coordinate Zn(2+). Asparagine 272 carries N-linked (GlcNAc...) asparagine glycosylation. The Proton acceptor role is filled by glutamate 303. Positions 304 and 332 each coordinate Zn(2+). N-linked (GlcNAc...) asparagine glycosylation is present at asparagine 352. Histidine 430 lines the Zn(2+) pocket.

The protein belongs to the peptidase M28 family. M28A subfamily. Monomer. It depends on Zn(2+) as a cofactor.

It localises to the secreted. Activity is inhibited by EDTA, o-phenanthroline, bestatin and amastatin. Its function is as follows. Extracellular aminopeptidase that releases a wide variety of amino acids from natural peptides and contributes to pathogenicity. The protein is Leucine aminopeptidase 2 (LAP2) of Trichophyton rubrum (Athlete's foot fungus).